The primary structure comprises 316 residues: MSIKEQSLMTPYLQFDRSQWAALRDSVPMTLTEDEIAQLKGINEDLSLEEVAEIYLPLSRLLNFYISSNLRRQAVLEQFLGTNGQRIPYIISIAGSVAVGKSTTARVLQALLSRWPEHRRVELITTDGFLHPNQVLKERGLMKKKGFPESYDMHRLVKFVSDLKSGVPNVTAPVYSHLIYDVIPEGDKTVAQPDILILEGLNVLQSGMDYPHDPHHVFVSDFVDFSIYVDAPEELLQTWYINRFLKFREGAFTDPDSYFHNYAKLSKEEAVNTAASLWKEINWLNLKQNILPTRERASLIMTKSANHAVEQVRLRK.

Residue 95–102 (GSVAVGKS) coordinates ATP.

This sequence belongs to the prokaryotic pantothenate kinase family.

The protein resides in the cytoplasm. The catalysed reaction is (R)-pantothenate + ATP = (R)-4'-phosphopantothenate + ADP + H(+). It functions in the pathway cofactor biosynthesis; coenzyme A biosynthesis; CoA from (R)-pantothenate: step 1/5. The protein is Pantothenate kinase of Salmonella agona (strain SL483).